Here is a 607-residue protein sequence, read N- to C-terminus: Terpenoid synthase 9 (607 aa).

Positions 356, 360, 501, and 509 each coordinate Mg(2+). A DDXXD motif motif is present at residues 356 to 360 (DDTFD).

The protein belongs to the terpene synthase family. Tpsa subfamily. Mg(2+) serves as cofactor. Mn(2+) is required as a cofactor. In terms of tissue distribution, predominantly expressed in roots but also in stems, leaves and flowers.

Its subcellular location is the cytoplasm. It functions in the pathway secondary metabolite biosynthesis; terpenoid biosynthesis. Involved in terpene biosynthesis in roots. Possesses diterpene (C20) synthase activity in vitro. Does not seem to be involved in sesquiterpene (C15) biosynthesis. The chain is Terpenoid synthase 9 from Arabidopsis thaliana (Mouse-ear cress).